Reading from the N-terminus, the 512-residue chain is Serine palmitoyltransferase 3 (512 aa).

Lys345 carries the N6-(pyridoxal phosphate)lysine modification.

This sequence belongs to the class-II pyridoxal-phosphate-dependent aminotransferase family. Heterodimer of sptl-1/sptl-3. Pyridoxal 5'-phosphate is required as a cofactor.

The enzyme catalyses L-serine + hexadecanoyl-CoA + H(+) = 3-oxosphinganine + CO2 + CoA. The protein operates within lipid metabolism; sphingolipid metabolism. In terms of biological role, component of the serine palmitoyltransferase (SPT) that catalyzes the first committed step in sphingolipid biosynthesis, which is the condensation of an acyl-CoA species and L-serine. The catalytic core is composed of a heterodimer of sptl-1 and sptl-2 or sptl-1 and sptl-3. Required for the specification of abicobasal polarity and development of the gut lumen. The polypeptide is Serine palmitoyltransferase 3 (sptl-3) (Caenorhabditis elegans).